A 318-amino-acid polypeptide reads, in one-letter code: Acetyl-coenzyme A carboxylase carboxyl transferase subunit alpha (318 aa).

One can recognise a CoA carboxyltransferase C-terminal domain in the interval 34–295; it reads DIEDQISQLR…KQAIKKDLSE (262 aa).

This sequence belongs to the AccA family. Acetyl-CoA carboxylase is a heterohexamer composed of biotin carboxyl carrier protein (AccB), biotin carboxylase (AccC) and two subunits each of ACCase subunit alpha (AccA) and ACCase subunit beta (AccD).

The protein resides in the cytoplasm. It catalyses the reaction N(6)-carboxybiotinyl-L-lysyl-[protein] + acetyl-CoA = N(6)-biotinyl-L-lysyl-[protein] + malonyl-CoA. Its pathway is lipid metabolism; malonyl-CoA biosynthesis; malonyl-CoA from acetyl-CoA: step 1/1. Functionally, component of the acetyl coenzyme A carboxylase (ACC) complex. First, biotin carboxylase catalyzes the carboxylation of biotin on its carrier protein (BCCP) and then the CO(2) group is transferred by the carboxyltransferase to acetyl-CoA to form malonyl-CoA. This is Acetyl-coenzyme A carboxylase carboxyl transferase subunit alpha from Colwellia psychrerythraea (strain 34H / ATCC BAA-681) (Vibrio psychroerythus).